The chain runs to 362 residues: Chorismate synthase (362 aa).

NADP(+) contacts are provided by Arg48 and Arg54. FMN contacts are provided by residues 125 to 127, 238 to 239, Gly278, 293 to 297, and Arg319; these read RSS, NA, and KPTSS.

It belongs to the chorismate synthase family. As to quaternary structure, homotetramer. It depends on FMNH2 as a cofactor.

It catalyses the reaction 5-O-(1-carboxyvinyl)-3-phosphoshikimate = chorismate + phosphate. Its pathway is metabolic intermediate biosynthesis; chorismate biosynthesis; chorismate from D-erythrose 4-phosphate and phosphoenolpyruvate: step 7/7. Catalyzes the anti-1,4-elimination of the C-3 phosphate and the C-6 proR hydrogen from 5-enolpyruvylshikimate-3-phosphate (EPSP) to yield chorismate, which is the branch point compound that serves as the starting substrate for the three terminal pathways of aromatic amino acid biosynthesis. This reaction introduces a second double bond into the aromatic ring system. This chain is Chorismate synthase, found in Psychromonas ingrahamii (strain DSM 17664 / CCUG 51855 / 37).